Reading from the N-terminus, the 286-residue chain is uncharacterized protein (286 aa).

One can recognise an HTH lysR-type domain in the interval 1-58; sequence MLLEGIETLLVLSKEKTMSRTGSQLYISQSAVSKRIANLEKKLGKKLIVPAGRHIKLT. A DNA-binding region (H-T-H motif) is located at residues 18–37; that stretch reads MSRTGSQLYISQSAVSKRIA.

Belongs to the LysR transcriptional regulatory family.

This is an uncharacterized protein from Vibrio cholerae serotype O1 (strain ATCC 39315 / El Tor Inaba N16961).